The sequence spans 86 residues: Small ribosomal subunit protein eS21 (86 aa).

It belongs to the eukaryotic ribosomal protein eS21 family. In terms of assembly, component of the 40S small ribosomal subunit.

Its subcellular location is the cytoplasm. It is found in the cytosol. The protein localises to the rough endoplasmic reticulum. In Suberites domuncula (Sponge), this protein is Small ribosomal subunit protein eS21 (RPS21).